The primary structure comprises 616 residues: Dihydroxy-acid dehydratase (616 aa).

Asp-81 is a binding site for Mg(2+). Cys-122 contributes to the [2Fe-2S] cluster binding site. Residues Asp-123 and Lys-124 each coordinate Mg(2+). Position 124 is an N6-carboxylysine (Lys-124). Position 195 (Cys-195) interacts with [2Fe-2S] cluster. Residue Glu-491 participates in Mg(2+) binding. The active-site Proton acceptor is Ser-517.

It belongs to the IlvD/Edd family. As to quaternary structure, homodimer. [2Fe-2S] cluster serves as cofactor. Requires Mg(2+) as cofactor.

The enzyme catalyses (2R)-2,3-dihydroxy-3-methylbutanoate = 3-methyl-2-oxobutanoate + H2O. It catalyses the reaction (2R,3R)-2,3-dihydroxy-3-methylpentanoate = (S)-3-methyl-2-oxopentanoate + H2O. Its pathway is amino-acid biosynthesis; L-isoleucine biosynthesis; L-isoleucine from 2-oxobutanoate: step 3/4. It functions in the pathway amino-acid biosynthesis; L-valine biosynthesis; L-valine from pyruvate: step 3/4. In terms of biological role, functions in the biosynthesis of branched-chain amino acids. Catalyzes the dehydration of (2R,3R)-2,3-dihydroxy-3-methylpentanoate (2,3-dihydroxy-3-methylvalerate) into 2-oxo-3-methylpentanoate (2-oxo-3-methylvalerate) and of (2R)-2,3-dihydroxy-3-methylbutanoate (2,3-dihydroxyisovalerate) into 2-oxo-3-methylbutanoate (2-oxoisovalerate), the penultimate precursor to L-isoleucine and L-valine, respectively. The polypeptide is Dihydroxy-acid dehydratase (Yersinia pseudotuberculosis serotype I (strain IP32953)).